Reading from the N-terminus, the 90-residue chain is Barrier-to-autointegration factor-like protein (90 aa).

The protein belongs to the BAF family. As to quaternary structure, homodimer. Heterodimerizes with BANF1.

The protein resides in the nucleus. It is found in the cytoplasm. Its function is as follows. May play a role in BANF1 regulation and influence tissue-specific roles of BANF1. In Bos taurus (Bovine), this protein is Barrier-to-autointegration factor-like protein (BANF2).